A 576-amino-acid polypeptide reads, in one-letter code: Vesicular glutamate transporter 1 (576 aa).

Over Met-1–Tyr-63 the chain is Cytoplasmic. The chain crosses the membrane as a helical span at residues Ile-64–Gly-84. At Val-85–Val-116 the chain is on the vesicular side. A glycan (N-linked (GlcNAc...) asparagine) is linked at Asn-93. Residues Gly-117–Ile-137 form a helical membrane-spanning segment. Residues Cys-138–Lys-140 are Cytoplasmic-facing. A helical membrane pass occupies residues Phe-141–Ile-161. The Vesicular segment spans residues Pro-162–His-168. The chain crosses the membrane as a helical span at residues Phe-169 to Ala-189. The Cytoplasmic segment spans residues Cys-190–Thr-208. A helical transmembrane segment spans residues Thr-209–Val-229. Residues Gln-230–Ser-236 lie on the Vesicular side of the membrane. A helical membrane pass occupies residues Val-237–Tyr-257. At Glu-258–Met-302 the chain is on the cytoplasmic side. The helical transmembrane segment at Pro-303–Ile-323 threads the bilayer. The Vesicular segment spans residues Ser-324–Gly-341. Residues Leu-342–Ala-362 form a helical membrane-spanning segment. At Asp-363 to Lys-378 the chain is on the cytoplasmic side. Residues Met-379–His-399 traverse the membrane as a helical segment. The Vesicular segment spans residues Ser-400–Arg-401. A helical transmembrane segment spans residues Gly-402–Phe-422. Residues Asn-423–Ser-435 are Cytoplasmic-facing. A helical transmembrane segment spans residues Ile-436–Val-456. Residues Gly-457–Gln-469 lie on the Vesicular side of the membrane. The helical transmembrane segment at Tyr-470–Ala-490 threads the bilayer. Residues Ser-491–Ser-576 are Cytoplasmic-facing. The interval Ala-517 to Thr-547 is disordered. Positions Gly-534 to Gly-545 are enriched in polar residues.

Belongs to the major facilitator superfamily. Sodium/anion cotransporter family. VGLUT subfamily.

It localises to the cytoplasmic vesicle. The protein resides in the secretory vesicle. Its subcellular location is the synaptic vesicle membrane. It is found in the cell membrane. The protein localises to the synapse. It localises to the synaptosome. The enzyme catalyses L-glutamate(out) = L-glutamate(in). It carries out the reaction chloride(in) = chloride(out). The catalysed reaction is 3 Na(+)(out) + phosphate(out) = 3 Na(+)(in) + phosphate(in). It catalyses the reaction phosphate(in) = phosphate(out). The enzyme catalyses K(+)(in) + H(+)(out) = K(+)(out) + H(+)(in). With respect to regulation, chloride channel activity is allosterically activated by lumenal H(+) and Cl(-) leading to synaptic vesicles acidification. The L-glutamate transport activity is allosterically activated by lumenal H(+) and Cl(-). The allosteric activation by H(+) efficiently prevents non-vesicular efflux across the plasma membrane, thereby restricting L-glutamate transport activity to acidic membranes such as synaptic vesicles. Functionally, multifunctional transporter that transports L-glutamate as well as multiple ions such as chloride, proton, potassium, sodium and phosphate. At the synaptic vesicle membrane, mainly functions as an uniporter which transports preferentially L-glutamate but also phosphate from the cytoplasm into synaptic vesicles at presynaptic nerve terminals of excitatory neural cells. The L-glutamate or phosphate uniporter activity is electrogenic and is driven by the proton electrochemical gradient, mainly by the electrical gradient established by the vacuolar H(+)-ATPase across the synaptic vesicle membrane. In addition, functions as a chloride channel that allows a chloride permeation through the synaptic vesicle membrane that affects the proton electrochemical gradient and promotes synaptic vesicles acidification. Moreover, may function as a K(+)/H(+) antiport allowing to maintain the electrical gradient and to decrease chemical gradient and therefore sustain vesicular glutamate uptake. The vesicular K(+)/H(+) antiport activity is electroneutral. At the plasma membrane, following exocytosis, functions as a symporter of Na(+) and phosphate from the extracellular space to the cytoplasm allowing synaptic phosphate homeostasis regulation. The symporter activity is driven by an inside negative membrane potential and is electrogenic. Is necessary for synaptic signaling of visual-evoked responses from photoreceptors. This chain is Vesicular glutamate transporter 1, found in Xenopus tropicalis (Western clawed frog).